Here is a 163-residue protein sequence, read N- to C-terminus: UPF0478 protein SAB1599c (163 aa).

A helical transmembrane segment spans residues 7-27; the sequence is IAGIIAAIAFLILCIGIVAVL.

The protein belongs to the UPF0478 family.

Its subcellular location is the cell membrane. This is UPF0478 protein SAB1599c from Staphylococcus aureus (strain bovine RF122 / ET3-1).